The sequence spans 500 residues: NAD(P)H-quinone oxidoreductase chain 4, chloroplastic (500 aa).

14 consecutive transmembrane segments (helical) span residues 4–24, 37–57, 87–107, 113–130, 134–154, 167–187, 211–231, 242–262, 274–294, 313–333, 334–354, 386–406, 417–437, and 462–482; these read FPWL…IFFL, ISIC…HFQL, LGSI…AWPI, LFYF…GLFS, LLLF…LLSM, FILY…GMGL, ILLY…IPLH, HYST…YGLI, YLFS…AALT, MGFI…GAIL, QILS…TASD, LALP…GLIT, LITF…LSML, and LFIL…PDFV.

The protein belongs to the complex I subunit 4 family.

Its subcellular location is the plastid. The protein localises to the chloroplast thylakoid membrane. The catalysed reaction is a plastoquinone + NADH + (n+1) H(+)(in) = a plastoquinol + NAD(+) + n H(+)(out). It carries out the reaction a plastoquinone + NADPH + (n+1) H(+)(in) = a plastoquinol + NADP(+) + n H(+)(out). The protein is NAD(P)H-quinone oxidoreductase chain 4, chloroplastic (ndhD) of Hordeum vulgare (Barley).